Consider the following 154-residue polypeptide: Transcriptional repressor NrdR (154 aa).

Residues 3-34 (CPFCRHPDSRVVDSRETDEGQAIRRRRSCPEC) fold into a zinc finger. The 91-residue stretch at 46–136 (LAVVKRSGVT…VYRSFESAAD (91 aa)) folds into the ATP-cone domain.

This sequence belongs to the NrdR family. Zn(2+) is required as a cofactor.

Negatively regulates transcription of bacterial ribonucleotide reductase nrd genes and operons by binding to NrdR-boxes. The protein is Transcriptional repressor NrdR of Mycobacterium sp. (strain JLS).